Here is a 465-residue protein sequence, read N- to C-terminus: 3-isopropylmalate dehydratase large subunit (465 aa).

The [4Fe-4S] cluster site is built by Cys-347, Cys-407, and Cys-410.

Belongs to the aconitase/IPM isomerase family. LeuC type 1 subfamily. In terms of assembly, heterodimer of LeuC and LeuD. It depends on [4Fe-4S] cluster as a cofactor.

It carries out the reaction (2R,3S)-3-isopropylmalate = (2S)-2-isopropylmalate. It functions in the pathway amino-acid biosynthesis; L-leucine biosynthesis; L-leucine from 3-methyl-2-oxobutanoate: step 2/4. In terms of biological role, catalyzes the isomerization between 2-isopropylmalate and 3-isopropylmalate, via the formation of 2-isopropylmaleate. In Buchnera aphidicola subsp. Pemphigus spyrothecae, this protein is 3-isopropylmalate dehydratase large subunit.